We begin with the raw amino-acid sequence, 462 residues long: UPF0236 protein TTE2489 (462 aa).

Belongs to the UPF0236 family.

The polypeptide is UPF0236 protein TTE2489 (Caldanaerobacter subterraneus subsp. tengcongensis (strain DSM 15242 / JCM 11007 / NBRC 100824 / MB4) (Thermoanaerobacter tengcongensis)).